Reading from the N-terminus, the 405-residue chain is 4-hydroxy-3-methylbut-2-en-1-yl diphosphate synthase (ferredoxin) (405 aa).

Residues cysteine 314, cysteine 317, cysteine 348, and glutamate 355 each contribute to the [4Fe-4S] cluster site.

This sequence belongs to the IspG family. [4Fe-4S] cluster is required as a cofactor.

It catalyses the reaction (2E)-4-hydroxy-3-methylbut-2-enyl diphosphate + 2 oxidized [2Fe-2S]-[ferredoxin] + H2O = 2-C-methyl-D-erythritol 2,4-cyclic diphosphate + 2 reduced [2Fe-2S]-[ferredoxin] + H(+). Its pathway is isoprenoid biosynthesis; isopentenyl diphosphate biosynthesis via DXP pathway; isopentenyl diphosphate from 1-deoxy-D-xylulose 5-phosphate: step 5/6. Its function is as follows. Converts 2C-methyl-D-erythritol 2,4-cyclodiphosphate (ME-2,4cPP) into 1-hydroxy-2-methyl-2-(E)-butenyl 4-diphosphate. The chain is 4-hydroxy-3-methylbut-2-en-1-yl diphosphate synthase (ferredoxin) from Prochlorococcus marinus subsp. pastoris (strain CCMP1986 / NIES-2087 / MED4).